The sequence spans 89 residues: Small ribosomal subunit protein uS15 (89 aa).

It belongs to the universal ribosomal protein uS15 family. In terms of assembly, part of the 30S ribosomal subunit. Forms a bridge to the 50S subunit in the 70S ribosome, contacting the 23S rRNA.

One of the primary rRNA binding proteins, it binds directly to 16S rRNA where it helps nucleate assembly of the platform of the 30S subunit by binding and bridging several RNA helices of the 16S rRNA. In terms of biological role, forms an intersubunit bridge (bridge B4) with the 23S rRNA of the 50S subunit in the ribosome. The protein is Small ribosomal subunit protein uS15 of Bacteroides fragilis (strain ATCC 25285 / DSM 2151 / CCUG 4856 / JCM 11019 / LMG 10263 / NCTC 9343 / Onslow / VPI 2553 / EN-2).